A 235-amino-acid polypeptide reads, in one-letter code: Small heat shock protein, chloroplastic (235 aa).

Disordered regions lie at residues 1–23 (MAYTSLTSSPLVSNVSVGGTSKI) and 51–80 (TGDNKDTSVDVHHSSAQGGNNQGTAVERRP). The segment covering 52-63 (GDNKDTSVDVHH) has biased composition (basic and acidic residues). Residues 64–74 (SSAQGGNNQGT) show a composition bias toward polar residues. In terms of domain architecture, sHSP spans 126 to 235 (SGTGEIRTPW…EKKVIDVQIN (110 aa)).

Belongs to the small heat shock protein (HSP20) family. As to expression, in fruits, flowers, leaves, and stems.

The protein localises to the plastid. It is found in the chloroplast. This is Small heat shock protein, chloroplastic (HSP21) from Solanum lycopersicum (Tomato).